A 300-amino-acid polypeptide reads, in one-letter code: Acetaldehyde dehydrogenase 1 (300 aa).

11–14 is a binding site for NAD(+); sequence SGNI. Cys126 serves as the catalytic Acyl-thioester intermediate. Residues 157 to 165 and Asn276 each bind NAD(+); that span reads SAGPGTRAN.

Belongs to the acetaldehyde dehydrogenase family.

It catalyses the reaction acetaldehyde + NAD(+) + CoA = acetyl-CoA + NADH + H(+). The sequence is that of Acetaldehyde dehydrogenase 1 from Rhodococcus erythropolis (strain PR4 / NBRC 100887).